Here is a 285-residue protein sequence, read N- to C-terminus: ATP phosphoribosyltransferase (285 aa).

The protein belongs to the ATP phosphoribosyltransferase family. Long subfamily. Mg(2+) is required as a cofactor.

The protein localises to the cytoplasm. It catalyses the reaction 1-(5-phospho-beta-D-ribosyl)-ATP + diphosphate = 5-phospho-alpha-D-ribose 1-diphosphate + ATP. It functions in the pathway amino-acid biosynthesis; L-histidine biosynthesis; L-histidine from 5-phospho-alpha-D-ribose 1-diphosphate: step 1/9. With respect to regulation, feedback inhibited by histidine. In terms of biological role, catalyzes the condensation of ATP and 5-phosphoribose 1-diphosphate to form N'-(5'-phosphoribosyl)-ATP (PR-ATP). Has a crucial role in the pathway because the rate of histidine biosynthesis seems to be controlled primarily by regulation of HisG enzymatic activity. In Streptomyces coelicolor (strain ATCC BAA-471 / A3(2) / M145), this protein is ATP phosphoribosyltransferase.